Here is a 318-residue protein sequence, read N- to C-terminus: Ankyrin repeat and SOCS box protein 7 (318 aa).

ANK repeat units follow at residues 13-42 (QEESQIQAAVAAGDVHTVRKMLEQGYSPNG), 46-75 (NGWTLLHFSAARGKERCVRVFLEHGADPTV), 80-109 (GGFTALHYAAMHGRARIARLMLESEYRSDI), 116-145 (DGWTPLHVAAHYGRDSFVRLLLEFKAEVDP), 149-178 (KGTTPLQLAIIRERSSCVKILLDHNANIDI), 180-208 (NGFLLRYAVIKSNHSYCRMFLQRGADTNL), and 213-242 (DGQTPLHLSALRDDVLCARMLYNYGADTNT). Positions 265-318 (LDFLQEVTRQPRNLQDLCRIKIRQCIGLQNLKLLDELPIAKVMKDYLKHKSDDI) constitute an SOCS box domain.

This sequence belongs to the ankyrin SOCS box (ASB) family. In terms of assembly, interacts with CUL5. Interacts with RNF7. Interacts with PSRC1.

It functions in the pathway protein modification; protein ubiquitination. In terms of biological role, probable substrate-recognition component of a SCF-like ECS (Elongin-Cullin-SOCS-box protein) E3 ubiquitin-protein ligase complex which mediates the ubiquitination and subsequent proteasomal degradation of target proteins. Plays a role in spindle dynamics and genome integrity by targeting the mitotic progression protein PSRC1 for proteasomal degradation in a cell cycle-dependent manner. Also participates in meiosis by mediating the proper attachment between kinetochores and microtubules. This chain is Ankyrin repeat and SOCS box protein 7 (ASB7), found in Pongo abelii (Sumatran orangutan).